The sequence spans 246 residues: 4-hydroxy-tetrahydrodipicolinate reductase (246 aa).

Residues Gly8–Met13, Gly75–Thr77, and Ala99–Tyr102 contribute to the NAD(+) site. The Proton donor/acceptor role is filled by His132. Position 133 (His133) interacts with (S)-2,3,4,5-tetrahydrodipicolinate. Lys136 acts as the Proton donor in catalysis. Gly142–Thr143 contacts (S)-2,3,4,5-tetrahydrodipicolinate.

It belongs to the DapB family.

The protein localises to the cytoplasm. It catalyses the reaction (S)-2,3,4,5-tetrahydrodipicolinate + NAD(+) + H2O = (2S,4S)-4-hydroxy-2,3,4,5-tetrahydrodipicolinate + NADH + H(+). The enzyme catalyses (S)-2,3,4,5-tetrahydrodipicolinate + NADP(+) + H2O = (2S,4S)-4-hydroxy-2,3,4,5-tetrahydrodipicolinate + NADPH + H(+). It participates in amino-acid biosynthesis; L-lysine biosynthesis via DAP pathway; (S)-tetrahydrodipicolinate from L-aspartate: step 4/4. Catalyzes the conversion of 4-hydroxy-tetrahydrodipicolinate (HTPA) to tetrahydrodipicolinate. In Akkermansia muciniphila (strain ATCC BAA-835 / DSM 22959 / JCM 33894 / BCRC 81048 / CCUG 64013 / CIP 107961 / Muc), this protein is 4-hydroxy-tetrahydrodipicolinate reductase.